A 465-amino-acid chain; its full sequence is Probable M18 family aminopeptidase 1 (465 aa).

Residues His-105, His-180, and His-441 each contribute to the Zn(2+) site.

The protein belongs to the peptidase M18 family. It depends on Zn(2+) as a cofactor.

This is Probable M18 family aminopeptidase 1 (apeA) from Clostridium acetobutylicum (strain ATCC 824 / DSM 792 / JCM 1419 / IAM 19013 / LMG 5710 / NBRC 13948 / NRRL B-527 / VKM B-1787 / 2291 / W).